The sequence spans 125 residues: Small ribosomal subunit protein uS12c (125 aa).

It belongs to the universal ribosomal protein uS12 family. As to quaternary structure, part of the 30S ribosomal subunit.

It localises to the plastid. It is found in the chloroplast. Functionally, with S4 and S5 plays an important role in translational accuracy. Located at the interface of the 30S and 50S subunits. The protein is Small ribosomal subunit protein uS12c (rps12) of Nephroselmis olivacea (Green alga).